We begin with the raw amino-acid sequence, 198 residues long: Recombination protein RecR (198 aa).

The C4-type zinc-finger motif lies at 57–72 (CSICGRLTDDDPCSIC). The Toprim domain occupies 80–175 (TTILVLEDSR…KVTRLARGLA (96 aa)).

Belongs to the RecR family.

Its function is as follows. May play a role in DNA repair. It seems to be involved in an RecBC-independent recombinational process of DNA repair. It may act with RecF and RecO. The protein is Recombination protein RecR of Streptococcus pneumoniae serotype 2 (strain D39 / NCTC 7466).